We begin with the raw amino-acid sequence, 216 residues long: Probable calcium-binding protein CML35 (216 aa).

The segment at 18–58 (TKSKASVSRSEPSSFSSNASSSSSDGSYGNLKQGPTATPIS) is disordered. The span at 23–44 (SVSRSEPSSFSSNASSSSSDGS) shows a compositional bias: low complexity. EF-hand domains follow at residues 66–101 (DFYTELVQAFKLIDRDDDGVVSRGDLAALISRLSHE), 103–138 (PSQEEVSLMLREVDGGDGGCISLEDLASRVAGTSGE), 141–176 (VETEELREVFEIFDVDRNGKISAEELHRVFGVIGDE), and 178–213 (CTLEECMRMIATVDGNGDGFVCFDDFCRMMVPAMND). Residues Asp79, Asp81, Asp83, and Asp90 each coordinate Ca(2+). Asp154, Asp156, Asn158, Lys160, Glu165, Asp191, Asn193, Asp195, and Asp202 together coordinate Ca(2+).

Functionally, potential calcium sensor. In Arabidopsis thaliana (Mouse-ear cress), this protein is Probable calcium-binding protein CML35 (CML35).